A 176-amino-acid chain; its full sequence is Cytochrome c oxidase subunit 4 isoform 2, mitochondrial (176 aa).

A mitochondrion-targeting transit peptide spans 1 to 28; the sequence is MLRLTAGRVRSLLAGRATAAFSTSSARM. Residues 29-106 are Mitochondrial matrix-facing; sequence ASHDLEVAES…TYSEMKQPSS (78 aa). The helical transmembrane segment at 107–132 threads the bilayer; the sequence is EWKTVFGGIFIFLGFTGLVVWWQALY. At 133 to 176 the chain is on the mitochondrial intermembrane side; sequence VYPPRPRTFDDEWKAKQLKRMLDMRVNPIEGFSAKWDYEKGQWK.

Belongs to the cytochrome c oxidase IV family. Component of the cytochrome c oxidase (complex IV, CIV), a multisubunit enzyme composed of 14 subunits. The complex is composed of a catalytic core of 3 subunits MT-CO1, MT-CO2 and MT-CO3, encoded in the mitochondrial DNA, and 11 supernumerary subunits COX4I, COX5A, COX5B, COX6A, COX6B, COX6C, COX7A, COX7B, COX7C, COX8 and NDUFA4, which are encoded in the nuclear genome. The complex exists as a monomer or a dimer and forms supercomplexes (SCs) in the inner mitochondrial membrane with NADH-ubiquinone oxidoreductase (complex I, CI) and ubiquinol-cytochrome c oxidoreductase (cytochrome b-c1 complex, complex III, CIII), resulting in different assemblies (supercomplex SCI(1)III(2)IV(1) and megacomplex MCI(2)III(2)IV(2)).

It localises to the mitochondrion inner membrane. Its pathway is energy metabolism; oxidative phosphorylation. Its function is as follows. Component of the cytochrome c oxidase, the last enzyme in the mitochondrial electron transport chain which drives oxidative phosphorylation. The respiratory chain contains 3 multisubunit complexes succinate dehydrogenase (complex II, CII), ubiquinol-cytochrome c oxidoreductase (cytochrome b-c1 complex, complex III, CIII) and cytochrome c oxidase (complex IV, CIV), that cooperate to transfer electrons derived from NADH and succinate to molecular oxygen, creating an electrochemical gradient over the inner membrane that drives transmembrane transport and the ATP synthase. Cytochrome c oxidase is the component of the respiratory chain that catalyzes the reduction of oxygen to water. Electrons originating from reduced cytochrome c in the intermembrane space (IMS) are transferred via the dinuclear copper A center (CU(A)) of subunit 2 and heme A of subunit 1 to the active site in subunit 1, a binuclear center (BNC) formed by heme A3 and copper B (CU(B)). The BNC reduces molecular oxygen to 2 water molecules using 4 electrons from cytochrome c in the IMS and 4 protons from the mitochondrial matrix. This Thunnus obesus (Bigeye tuna) protein is Cytochrome c oxidase subunit 4 isoform 2, mitochondrial.